The sequence spans 809 residues: H(+)/Cl(-) exchange transporter 7 (809 aa).

Over 1-130 (MANVSKKVSW…TAFRTVEIKR (130 aa)) the chain is Cytoplasmic. Residues S9 and S64 each carry the phosphoserine modification. Helical transmembrane passes span 131–163 (WVIC…YRLV) and 178–201 (FSLL…VAFI). The Selectivity filter part_1 signature appears at 207–211 (GSGIP). Chloride is bound at residue S208. Residues 210–217 (IPQIKCFL) constitute an intramembrane region (helical). A run of 2 helical transmembrane segments spans residues 227–245 (RLKT…VVGG) and 251–268 (EGPM…ISQG). The short motif at 249–253 (GKEGP) is the Selectivity filter part_2 element. 2 consecutive intramembrane regions (helical) follow at residues 292–304 (FVSA…VSAA) and 308–316 (PVGGVLFSL). 5 helical membrane passes run 326-345 (FLTW…LNFV), 379-409 (IPIF…FRIR), 414-436 (PCLQ…FVLI), 491-511 (PMTL…TYGL), and 516-539 (GVFI…LSYI). Positions 516–520 (GVFIP) match the Selectivity filter part_3 motif. Residue F518 coordinates chloride. The segment at residues 549–563 (GKYALMGAAAQLGGI) is an intramembrane region (helical). The segment at residues 564-566 (VRM) is an intramembrane region (note=Loop between two helices). The helical intramembrane region spans 567 to 578 (TLSLTVIMMEAT). The note=Loop between two helices intramembrane region spans 579-582 (SSVT). The helical transmembrane segment at 583 to 601 (YGFPIMLVLMTAKIVGDVF) threads the bilayer. The Cytoplasmic segment spans residues 602–809 (IEGLYDMHIQ…GLEELSLAQT (208 aa)). Y606 is a binding site for chloride. CBS domains follow at residues 635–699 (MSTP…VFVE) and 745–803 (MNPS…GLEE). Residues 662-664 (HNG) and 787-790 (TRKD) contribute to the ATP site. S805 carries the post-translational modification Phosphoserine.

The protein belongs to the chloride channel (TC 2.A.49) family. ClC-7/CLCN7 subfamily. Chloride channel 7 are heteromers of alpha (CLCN7) and beta (OSTM1) subunits.

It localises to the lysosome membrane. It catalyses the reaction 2 chloride(in) + H(+)(out) = 2 chloride(out) + H(+)(in). Functionally, slowly voltage-gated channel mediating the exchange of chloride ions against protons. Functions as antiporter and contributes to the acidification of the lysosome lumen and may be involved in maintaining lysosomal pH. The CLC channel family contains both chloride channels and proton-coupled anion transporters that exchange chloride or another anion for protons. The presence of conserved gating glutamate residues is typical for family members that function as antiporters. This Bos taurus (Bovine) protein is H(+)/Cl(-) exchange transporter 7 (CLCN7).